Consider the following 293-residue polypeptide: AA9 family lytic polysaccharide monooxygenase E (293 aa).

An N-terminal signal peptide occupies residues M1–A19. H20 and H90 together coordinate Cu(2+). A disulfide bond links C59 and C172. H158 and Q167 together coordinate O2. Y169 lines the Cu(2+) pocket. A CBM1 domain is found at C257 to V293.

Belongs to the polysaccharide monooxygenase AA9 family. The cofactor is Cu(2+).

The protein resides in the secreted. The catalysed reaction is [(1-&gt;4)-beta-D-glucosyl]n+m + reduced acceptor + O2 = 4-dehydro-beta-D-glucosyl-[(1-&gt;4)-beta-D-glucosyl]n-1 + [(1-&gt;4)-beta-D-glucosyl]m + acceptor + H2O.. Glucose dehydrogenase and aryl-alcohol quinone oxidoreductases regulate the oxidative degradation of cellulose since they can act as catalytically efficient electron donors for LPMO9E. Lytic polysaccharide monooxygenase (LPMO) that depolymerizes crystalline and amorphous polysaccharides via the oxidation of scissile alpha- or beta-(1-4)-glycosidic bonds, yielding only C1 oxidation products. Catalysis by LPMOs requires the reduction of the active-site copper from Cu(II) to Cu(I) by a reducing agent and H(2)O(2) or O(2) as a cosubstrate. Improves the progression of lytic enzymes in delignified miscanthus cell walls. This boosting effect dependents on the cellular type which indicates contrasted recalcitrance levels in plant tissues. In Podospora anserina (strain S / ATCC MYA-4624 / DSM 980 / FGSC 10383) (Pleurage anserina), this protein is AA9 family lytic polysaccharide monooxygenase E.